A 277-amino-acid polypeptide reads, in one-letter code: 3-methyl-2-oxobutanoate hydroxymethyltransferase (277 aa).

Mg(2+) is bound by residues Asp42 and Asp81. 3-methyl-2-oxobutanoate contacts are provided by residues 42–43, Asp81, and Lys110; that span reads DS. Glu112 lines the Mg(2+) pocket. Glu179 functions as the Proton acceptor in the catalytic mechanism.

Belongs to the PanB family. Homodecamer; pentamer of dimers. Requires Mg(2+) as cofactor.

It localises to the cytoplasm. It carries out the reaction 3-methyl-2-oxobutanoate + (6R)-5,10-methylene-5,6,7,8-tetrahydrofolate + H2O = 2-dehydropantoate + (6S)-5,6,7,8-tetrahydrofolate. It functions in the pathway cofactor biosynthesis; (R)-pantothenate biosynthesis; (R)-pantoate from 3-methyl-2-oxobutanoate: step 1/2. Functionally, catalyzes the reversible reaction in which hydroxymethyl group from 5,10-methylenetetrahydrofolate is transferred onto alpha-ketoisovalerate to form ketopantoate. The sequence is that of 3-methyl-2-oxobutanoate hydroxymethyltransferase from Anaplasma marginale (strain St. Maries).